Reading from the N-terminus, the 271-residue chain is Solute carrier family 66 member 2 (271 aa).

The next 3 helical transmembrane spans lie at 7-27, 49-69, and 72-92; these read GWLLVPLHQLVSWVAAGAMVF, FSTHVCLVLLVANILRILFWF, and HFESPLLWQSIVMILTMLLML. The PQ-loop 1 domain occupies 14 to 80; sequence HQLVSWVAAG…RHFESPLLWQ (67 aa). Ser110 carries the post-translational modification Phosphoserine. 3 helical membrane-spanning segments follow: residues 145-165, 168-188, and 232-252; these read DYVQCVLAFTGVAGYITYLSI, ALFVETLGFLAVLTEAMLGVP, and VCGLLQVMVDLVILGQAYAFA. One can recognise a PQ-loop 2 domain in the interval 178–233; it reads AVLTEAMLGVPQLYRNYCHRSTEGMSLKMVLMWTSGDTFKTAYFLLNGAPLQFSVC.

It localises to the membrane. The polypeptide is Solute carrier family 66 member 2 (Slc66a2) (Mus musculus (Mouse)).